Here is a 349-residue protein sequence, read N- to C-terminus: Protein Wnt-7a (349 aa).

A signal peptide spans 1 to 31 (MNRKARRCLGHLFLSLGMVYLRIGGFSTVVA). 5 cysteine pairs are disulfide-bonded: Cys-73–Cys-84, Cys-123–Cys-131, Cys-133–Cys-152, Cys-200–Cys-214, and Cys-202–Cys-209. Residues Asn-83 and Asn-127 are each glycosylated (N-linked (GlcNAc...) asparagine). Residue Ser-206 is the site of O-palmitoleoyl serine; by PORCN attachment. The tract at residues 238–266 (VEPVRASRNKRPTFLKIKKPLSYRKPMDT) is disordered linker. Intrachain disulfides connect Cys-278/Cys-309, Cys-294/Cys-304, Cys-308/Cys-348, Cys-324/Cys-339, Cys-326/Cys-336, and Cys-331/Cys-332. A glycan (N-linked (GlcNAc...) asparagine) is linked at Asn-295.

This sequence belongs to the Wnt family. In terms of assembly, forms a soluble 1:1 complex with AFM; this prevents oligomerization and is required for prolonged biological activity. The complex with AFM may represent the physiological form in body fluids. Interacts with PORCN. Interacts (via intrinsically disordered linker region) with RECK; interaction with RECK confers ligand selectivity for Wnt7 in brain endothelial cells and allows these cells to selectively respond to Wnt7. Interacts with FZD5. Palmitoleoylation is required for efficient binding to frizzled receptors. Depalmitoleoylation leads to Wnt signaling pathway inhibition.

It localises to the secreted. The protein resides in the extracellular space. It is found in the extracellular matrix. Ligand for members of the frizzled family of seven transmembrane receptors that functions in the canonical Wnt/beta-catenin signaling pathway. Plays an important role in embryonic development, including dorsal versus ventral patterning during limb development, skeleton development and urogenital tract development. Required for central nervous system (CNS) angiogenesis and blood-brain barrier regulation. Required for normal, sexually dimorphic development of the Mullerian ducts, and for normal fertility in both sexes. Required for normal neural stem cell proliferation in the hippocampus dentate gyrus. Required for normal progress through the cell cycle in neural progenitor cells, for self-renewal of neural stem cells, and for normal neuronal differentiation and maturation. Promotes formation of synapses via its interaction with FZD5. The sequence is that of Protein Wnt-7a (WNT7A) from Chlorocebus aethiops (Green monkey).